The primary structure comprises 397 residues: MKFNKEKLVIHACVLLFIIISIGLVFHRLQTKTNSIEPIHKETKLSDNAKYLVDRNKGKGEPSKLKEVYNSKDPKYKKIDRYLQNSLFNGSVAVYENGKLKMSKGYGYQDFEKGIKNTPNTMFLIGSAQKFSTGLLLKQLEEEHKININDPVSKYIPWFKTSKPIPLKDLMLHQSGLYKYKSSKDYKNLDQAVRAIQKRGIDPKKYKKHMYNDGNYLVLAKVIEEVTGKSYAENYYTKIGDPLKLQHSAFYDEKSFRKYFAKGYSYNSTGLSFLKPNVLEQYYGAGNIYMTPTDMGKLITQIQQYKLFSPKITNPLLHEFGTKQYPDEYRYGFYVKPTLNRLNGGLFGQVFTVYYNDKYVVVLALNVKGNNEVRIKHIYNDILKQNKPYNTKGVIVQ.

A signal peptide spans 1 to 27; sequence MKFNKEKLVIHACVLLFIIISIGLVFH.

The protein localises to the cell membrane. It carries out the reaction [(4-D-Ala)-(2-GlcNAc)-Rib-ol-P]n-[Gro-P]m-beta-D-ManNAc-(1-&gt;4)-alpha-D-GlcNAc-P-peptidoglycan + n H2O = [(2-GlcNAc)-Rib-ol-P]n-[Gro-P]m-beta-D-ManNAc-(1-&gt;4)-alpha-D-GlcNAc-P-peptidoglycan + n D-alanine.. Catalyzes the liberation of D-alanyl moieties present on wall teichoic acid (WTA) and lipoteichoic acid (LTA). Affects the methicillin resistance level and autolysis in the presence of Triton X-100 as well as the cell wall structure. The sequence is that of Teichoic acid D-alanine hydrolase (fmtA) from Staphylococcus aureus (strain MRSA252).